The sequence spans 159 residues: Cytochrome c-type biogenesis protein CcmE (159 aa).

Residues 1-8 (MNLRRKNR) are Cytoplasmic-facing. The helical; Signal-anchor for type II membrane protein transmembrane segment at 9 to 29 (LWVVCAVLAGLALTTALVLYA) threads the bilayer. Residues 30 to 159 (LRANIDLFYT…PQRADKDTSS (130 aa)) are Periplasmic-facing. Positions 129–159 (KHDENYTPPEVEKAMQENHRRPQRADKDTSS) are disordered. Heme contacts are provided by H130 and Y134.

The protein belongs to the CcmE/CycJ family.

It localises to the cell inner membrane. In terms of biological role, heme chaperone required for the biogenesis of c-type cytochromes. Transiently binds heme delivered by CcmC and transfers the heme to apo-cytochromes in a process facilitated by CcmF and CcmH. This Salmonella paratyphi A (strain ATCC 9150 / SARB42) protein is Cytochrome c-type biogenesis protein CcmE.